The sequence spans 163 residues: 3-hydroxyacyl-[acyl-carrier-protein] dehydratase FabZ (163 aa).

His61 is an active-site residue.

The protein belongs to the thioester dehydratase family. FabZ subfamily.

The protein localises to the cytoplasm. The enzyme catalyses a (3R)-hydroxyacyl-[ACP] = a (2E)-enoyl-[ACP] + H2O. Its function is as follows. Involved in unsaturated fatty acids biosynthesis. Catalyzes the dehydration of short chain beta-hydroxyacyl-ACPs and long chain saturated and unsaturated beta-hydroxyacyl-ACPs. The protein is 3-hydroxyacyl-[acyl-carrier-protein] dehydratase FabZ of Dinoroseobacter shibae (strain DSM 16493 / NCIMB 14021 / DFL 12).